A 762-amino-acid chain; its full sequence is FAST kinase domain-containing protein 5, mitochondrial (762 aa).

Serine 95 carries the post-translational modification Phosphoserine. An N6-acetyllysine modification is found at lysine 506. In terms of domain architecture, RAP spans 695-755; that stretch reads LAIQFTNKNQ…RLEKLAYLHE (61 aa).

Belongs to the FAST kinase family. As to quaternary structure, found in a complex with GRSF1, DDX28, DHX30 and FASTKD2. Associates with the 12S mitochondrial rRNA (12S mt-rRNA). As to expression, expression detected in spleen, testis, colon, heart, smooth muscle, kidney, brain, lung, liver, brown and white adipose tissue.

It localises to the mitochondrion matrix. The protein localises to the mitochondrion nucleoid. Its function is as follows. Plays an important role in the processing of non-canonical mitochondrial mRNA precursors. This is FAST kinase domain-containing protein 5, mitochondrial (Fastkd5) from Mus musculus (Mouse).